We begin with the raw amino-acid sequence, 243 residues long: Probable phosphatase CBO3379/CLC_3322 (243 aa).

Zn(2+) contacts are provided by histidine 8, histidine 10, histidine 16, histidine 41, glutamate 74, histidine 102, histidine 132, aspartate 192, and histidine 194.

The protein belongs to the PHP family. Requires Zn(2+) as cofactor.

The sequence is that of Probable phosphatase CBO3379/CLC_3322 from Clostridium botulinum (strain Hall / ATCC 3502 / NCTC 13319 / Type A).